The chain runs to 157 residues: Transcription elongation factor GreB (157 aa).

It belongs to the GreA/GreB family. GreB subfamily.

Functionally, necessary for efficient RNA polymerase transcription elongation past template-encoded arresting sites. The arresting sites in DNA have the property of trapping a certain fraction of elongating RNA polymerases that pass through, resulting in locked ternary complexes. Cleavage of the nascent transcript by cleavage factors such as GreA or GreB allows the resumption of elongation from the new 3'terminus. GreB releases sequences of up to 9 nucleotides in length. This Salmonella typhimurium (strain LT2 / SGSC1412 / ATCC 700720) protein is Transcription elongation factor GreB.